The sequence spans 212 residues: Guanylate kinase (212 aa).

The region spanning 14–192 (GTALVICAPS…AYDELRATYL (179 aa)) is the Guanylate kinase-like domain. An ATP-binding site is contributed by 21–28 (APSGTGKT).

This sequence belongs to the guanylate kinase family.

It is found in the cytoplasm. The enzyme catalyses GMP + ATP = GDP + ADP. Essential for recycling GMP and indirectly, cGMP. This Lawsonia intracellularis (strain PHE/MN1-00) protein is Guanylate kinase.